Consider the following 450-residue polypeptide: Phosphoglucosamine mutase (450 aa).

The active-site Phosphoserine intermediate is serine 101. Serine 101, aspartate 242, aspartate 244, and aspartate 246 together coordinate Mg(2+). Serine 101 is subject to Phosphoserine.

The protein belongs to the phosphohexose mutase family. The cofactor is Mg(2+). In terms of processing, activated by phosphorylation.

It catalyses the reaction alpha-D-glucosamine 1-phosphate = D-glucosamine 6-phosphate. In terms of biological role, catalyzes the conversion of glucosamine-6-phosphate to glucosamine-1-phosphate. This is Phosphoglucosamine mutase from Rhodopseudomonas palustris (strain ATCC BAA-98 / CGA009).